Here is a 266-residue protein sequence, read N- to C-terminus: tRNA pseudouridine synthase A (266 aa).

Asp-57 acts as the Nucleophile in catalysis. Tyr-115 contributes to the substrate binding site.

It belongs to the tRNA pseudouridine synthase TruA family. Homodimer.

The catalysed reaction is uridine(38/39/40) in tRNA = pseudouridine(38/39/40) in tRNA. Formation of pseudouridine at positions 38, 39 and 40 in the anticodon stem and loop of transfer RNAs. This is tRNA pseudouridine synthase A from Buchnera aphidicola subsp. Acyrthosiphon pisum (strain APS) (Acyrthosiphon pisum symbiotic bacterium).